The sequence spans 324 residues: Lipoyl synthase (324 aa).

[4Fe-4S] cluster contacts are provided by cysteine 72, cysteine 77, cysteine 83, cysteine 98, cysteine 102, cysteine 105, and serine 313. The region spanning 84–302 (FRFGTASFMI…AQEGKKMGFL (219 aa)) is the Radical SAM core domain.

It belongs to the radical SAM superfamily. Lipoyl synthase family. It depends on [4Fe-4S] cluster as a cofactor.

It localises to the cytoplasm. It carries out the reaction [[Fe-S] cluster scaffold protein carrying a second [4Fe-4S](2+) cluster] + N(6)-octanoyl-L-lysyl-[protein] + 2 oxidized [2Fe-2S]-[ferredoxin] + 2 S-adenosyl-L-methionine + 4 H(+) = [[Fe-S] cluster scaffold protein] + N(6)-[(R)-dihydrolipoyl]-L-lysyl-[protein] + 4 Fe(3+) + 2 hydrogen sulfide + 2 5'-deoxyadenosine + 2 L-methionine + 2 reduced [2Fe-2S]-[ferredoxin]. It participates in protein modification; protein lipoylation via endogenous pathway; protein N(6)-(lipoyl)lysine from octanoyl-[acyl-carrier-protein]: step 2/2. In terms of biological role, catalyzes the radical-mediated insertion of two sulfur atoms into the C-6 and C-8 positions of the octanoyl moiety bound to the lipoyl domains of lipoate-dependent enzymes, thereby converting the octanoylated domains into lipoylated derivatives. This is Lipoyl synthase from Dichelobacter nodosus (strain VCS1703A).